Consider the following 141-residue polypeptide: Putative pre-16S rRNA nuclease (141 aa).

It belongs to the YqgF nuclease family.

Its subcellular location is the cytoplasm. Functionally, could be a nuclease involved in processing of the 5'-end of pre-16S rRNA. The protein is Putative pre-16S rRNA nuclease of Aliivibrio salmonicida (strain LFI1238) (Vibrio salmonicida (strain LFI1238)).